A 496-amino-acid chain; its full sequence is MKKYILSLDQGTTSSRAILFNKKGEIVHSAQKEFTQHFPKPGWVEHNAQEIWGSILAVIATCLSEADVKPEQIAGIGITNQRETAVVWDKTTGKPIYNAIVWQSRQTAEICDELKEKGYSEMVREKTGLLIDAYFSGTKVKWILDNVEGAREKAENGDLLFGTIDTWLVWKLSGGKAHVTDYSNASRTLMFNIHDLQWDDELLDMLTVPKSMLPEVRPSSEVYGETIDYHFFGQNVPIAGVAGDQQAALFGQACFGEGMAKNTYGTGCFMLMNTGEKAVASEHGLLTTIAWGIDGKVNYALEGSIFVAGSAIQWLRDGMRMFKDASESEVYASRVESTDGVYVVPAFVGLGTPYWDSEVRGAMFGVTRGTTKEHFIRATLESLAYQIKDVLCAMEADSGIELKTLRVDGGAVKNNFLMKFQSDILDVPVERPVINETTALGAAYLAGLAVGYWKNQDEIKEQWHMDKRFEPTMEAETSEELYAGWKKAIEATKAFK.

T12 contacts ADP. 3 residues coordinate ATP: T12, T13, and S14. T12 serves as a coordination point for sn-glycerol 3-phosphate. An ADP-binding site is contributed by R16. Sn-glycerol 3-phosphate contacts are provided by R82, E83, and Y134. R82, E83, and Y134 together coordinate glycerol. Residue H230 is modified to Phosphohistidine; by HPr. D244 provides a ligand contact to sn-glycerol 3-phosphate. 2 residues coordinate glycerol: D244 and Q245. 2 residues coordinate ADP: T266 and G309. ATP contacts are provided by T266, G309, Q313, and G410. Positions 410 and 414 each coordinate ADP.

The protein belongs to the FGGY kinase family. In terms of assembly, homotetramer and homodimer (in equilibrium). In terms of processing, the phosphoenolpyruvate-dependent sugar phosphotransferase system (PTS), including enzyme I, and histidine-containing protein (HPr) are required for the phosphorylation, which leads to the activation of the enzyme.

The enzyme catalyses glycerol + ATP = sn-glycerol 3-phosphate + ADP + H(+). Its pathway is polyol metabolism; glycerol degradation via glycerol kinase pathway; sn-glycerol 3-phosphate from glycerol: step 1/1. With respect to regulation, activated by phosphorylation and inhibited by fructose 1,6-bisphosphate (FBP). In terms of biological role, key enzyme in the regulation of glycerol uptake and metabolism. Catalyzes the phosphorylation of glycerol to yield sn-glycerol 3-phosphate. In Bacillus anthracis (strain A0248), this protein is Glycerol kinase.